A 160-amino-acid polypeptide reads, in one-letter code: Cyclic pyranopterin monophosphate synthase (160 aa).

Substrate-binding positions include 76 to 78 (MCH) and 113 to 114 (ME). Aspartate 128 is an active-site residue.

Belongs to the MoaC family. In terms of assembly, homohexamer; trimer of dimers.

It catalyses the reaction (8S)-3',8-cyclo-7,8-dihydroguanosine 5'-triphosphate = cyclic pyranopterin phosphate + diphosphate. Its pathway is cofactor biosynthesis; molybdopterin biosynthesis. Catalyzes the conversion of (8S)-3',8-cyclo-7,8-dihydroguanosine 5'-triphosphate to cyclic pyranopterin monophosphate (cPMP). This is Cyclic pyranopterin monophosphate synthase from Brevibacillus brevis (strain 47 / JCM 6285 / NBRC 100599).